Reading from the N-terminus, the 345-residue chain is KRR1 small subunit processome component homolog (345 aa).

Residues 125 to 193 (DIIKIGNLVH…VRDIVLETMN (69 aa)) enclose the KH domain. Over residues 232–245 (NISKRKQPKVKKQK) the composition is skewed to basic residues. Disordered stretches follow at residues 232-260 (NISK…ESKV) and 273-345 (QEQK…ARSS). The stretch at 270–298 (FLNQEQKQAKRNQERTEKQKEAAKRQDER) forms a coiled coil. 2 stretches are compositionally biased toward basic and acidic residues: residues 276-302 (KQAK…RNKD) and 315-330 (RKKE…DVKA). Positions 331-345 (LKAKLIKANKKARSS) are enriched in basic residues.

This sequence belongs to the KRR1 family. Monomer. Component of the ribosomal small subunit (SSU) processome.

It is found in the nucleus. It localises to the nucleolus. Functionally, required for 40S ribosome biogenesis. Involved in nucleolar processing of pre-18S ribosomal RNA and ribosome assembly. Binds to RNA. Required for female germline development, cell viability during eye development and for survival of dividing cells and epithelial cells during early wing disk development. The polypeptide is KRR1 small subunit processome component homolog (dbe) (Drosophila melanogaster (Fruit fly)).